The primary structure comprises 511 residues: Acetylcholine receptor subunit alpha-type unc-38 (511 aa).

A signal peptide spans 1–16; sequence MRSFWLFLLLLLFCIS. Topologically, residues 17 to 261 are extracellular; sequence FIKLTEGNED…QLRRKPLFYT (245 aa). The N-linked (GlcNAc...) asparagine glycan is linked to Asn124. Cys151 and Cys165 are oxidised to a cystine. N-linked (GlcNAc...) asparagine glycosylation is present at Asn202. Cys238 and Cys239 form a disulfide bridge. Transmembrane regions (helical) follow at residues 262–282, 291–311, and 324–344; these read VNLVFPCVGISFLTILVFYLP, LCISILVALTIFFLLLTEIIP, and LLFTMVMVTLSVVVTVISLNL. Over 345-464 the chain is Cytoplasmic; sequence HFRTPTTHLM…WKYVAMVLDR (120 aa). The chain crosses the membrane as a helical span at residues 465–485; sequence LFLLIFSIACFVGTVIILLRA.

The protein belongs to the ligand-gated ion channel (TC 1.A.9) family. Acetylcholine receptor (TC 1.A.9.1) subfamily. Component of nicotinic acetylcholine receptor. In muscles, composed of 2 non-alpha subunits lev-1 and unc-29, and 3 alpha subunits unc-38, unc-63 and lev-8. In cholinergic motoneurons, composed of 2 non-alpha subunits acr-2 and acr-3, and 3 alpha subunits unc-38, unc-63 and acr-12.

It localises to the postsynaptic cell membrane. Its subcellular location is the cell membrane. Alpha subunit of nicotinic acetylcholine receptor (nAChR). Probably acts in cholinergic motoneurons to regulate presynaptic neurotransmitter release, thereby ensuring normal level of excitation of cholinergic motoneurons during locomotion. Involved in nAChR sensitivity to nicotine. This chain is Acetylcholine receptor subunit alpha-type unc-38 (unc-38), found in Caenorhabditis elegans.